Consider the following 265-residue polypeptide: Glutamate racemase (265 aa).

Substrate contacts are provided by residues 9–10 (DS) and 41–42 (YG). Residue Cys72 is the Proton donor/acceptor of the active site. Residue 73-74 (NT) coordinates substrate. The Proton donor/acceptor role is filled by Cys183. 184 to 185 (TH) serves as a coordination point for substrate.

It belongs to the aspartate/glutamate racemases family.

The catalysed reaction is L-glutamate = D-glutamate. It functions in the pathway cell wall biogenesis; peptidoglycan biosynthesis. In terms of biological role, provides the (R)-glutamate required for cell wall biosynthesis. This chain is Glutamate racemase, found in Lysinibacillus sphaericus (strain C3-41).